We begin with the raw amino-acid sequence, 104 residues long: Protein enhancer of rudimentary (104 aa).

T18 carries the post-translational modification Phosphothreonine; by CK2. At S24 the chain carries Phosphoserine; by CK2.

Belongs to the E(R) family.

Its function is as follows. Acts as an enhancer of the rudimentary gene. Has a role in pyrimidine biosynthesis and the cell cycle. The chain is Protein enhancer of rudimentary (e(r)) from Drosophila virilis (Fruit fly).